Consider the following 392-residue polypeptide: UDP-N-acetylglucosamine--N-acetylmuramyl-(pentapeptide) pyrophosphoryl-undecaprenol N-acetylglucosamine transferase (392 aa).

UDP-N-acetyl-alpha-D-glucosamine contacts are provided by residues 14–16, Asn124, Arg167, Ser195, Ile251, and Gln296; that span reads TGG.

This sequence belongs to the glycosyltransferase 28 family. MurG subfamily.

It localises to the cell inner membrane. The catalysed reaction is di-trans,octa-cis-undecaprenyl diphospho-N-acetyl-alpha-D-muramoyl-L-alanyl-D-glutamyl-meso-2,6-diaminopimeloyl-D-alanyl-D-alanine + UDP-N-acetyl-alpha-D-glucosamine = di-trans,octa-cis-undecaprenyl diphospho-[N-acetyl-alpha-D-glucosaminyl-(1-&gt;4)]-N-acetyl-alpha-D-muramoyl-L-alanyl-D-glutamyl-meso-2,6-diaminopimeloyl-D-alanyl-D-alanine + UDP + H(+). It participates in cell wall biogenesis; peptidoglycan biosynthesis. Its function is as follows. Cell wall formation. Catalyzes the transfer of a GlcNAc subunit on undecaprenyl-pyrophosphoryl-MurNAc-pentapeptide (lipid intermediate I) to form undecaprenyl-pyrophosphoryl-MurNAc-(pentapeptide)GlcNAc (lipid intermediate II). In Sphingopyxis alaskensis (strain DSM 13593 / LMG 18877 / RB2256) (Sphingomonas alaskensis), this protein is UDP-N-acetylglucosamine--N-acetylmuramyl-(pentapeptide) pyrophosphoryl-undecaprenol N-acetylglucosamine transferase.